The primary structure comprises 528 residues: Purine-cytosine permease FCY21 (528 aa).

Over 1-90 (MPQTHEMSLN…DDSILNAASM (90 aa)) the chain is Cytoplasmic. Serine 43 is modified (phosphoserine). At threonine 46 the chain carries Phosphothreonine. A helical transmembrane segment spans residues 91-111 (WFSANMVLPAYAIGALGPMVF). Topologically, residues 112–118 (DLNFGQS) are extracellular. A helical membrane pass occupies residues 119–139 (VFVIIFFNLLGLVSVAFFSVF). The Cytoplasmic portion of the chain corresponds to 140 to 161 (GAELGLRQMILSRYLVGNIAAR). A helical membrane pass occupies residues 162-182 (IFSFINFIACIGWGIVNTVAS). The Extracellular portion of the chain corresponds to 183–198 (SQVLNMVNPGHQCPLW). A helical transmembrane segment spans residues 199–219 (AGCIVIIGATVIVTFFGYGVI). Over 220–221 (HA) the chain is Cytoplasmic. The helical transmembrane segment at 222–242 (YEKWAWVPNFAVFLVIIARLA) threads the bilayer. The Extracellular segment spans residues 243 to 260 (RSKKFVLGEWTSGPTTAG). Residues 261–281 (NVLSFGSTVYGFAAGWTTYAA) form a helical membrane-spanning segment. The Cytoplasmic segment spans residues 282-295 (DYTVYMPRKTNKYK). Residues 296–316 (IFFSLVVGLATPLYFTMILGA) traverse the membrane as a helical segment. Residues 317 to 340 (AVAMAAIGDPAWKTYYDENSIGGL) lie on the Extracellular side of the membrane. Residues 341–361 (TFAVLVPNSVHGFGQFCCVLL) traverse the membrane as a helical segment. Topologically, residues 362-393 (SLSTIANNVPNMYTIALSVQATWEPLAKVPRV) are cytoplasmic. A helical transmembrane segment spans residues 394 to 414 (IWTLLGNAAALGIAIPACYYF). The Extracellular segment spans residues 415–416 (ST). Residues 417–437 (FMNYFMDSIGYYLAIYIAIAC) traverse the membrane as a helical segment. Over 438-460 (SEHFIYRRSFSAYNVDDWDSWER) the chain is Cytoplasmic. A helical membrane pass occupies residues 461 to 481 (LPIGIAGTAALIVGAFGVALG). Topologically, residues 482 to 493 (MCQTYWVGEISR) are extracellular. A helical transmembrane segment spans residues 494-514 (LIGDYGGDIGFELGLSWAFIV). Residues 515-528 (YNIARPFELKYFGR) lie on the Cytoplasmic side of the membrane.

The protein belongs to the purine-cytosine permease (2.A.39) family.

The protein localises to the membrane. Functionally, probable purine-cytosine permease. This Saccharomyces cerevisiae (strain ATCC 204508 / S288c) (Baker's yeast) protein is Purine-cytosine permease FCY21 (FCY21).